A 116-amino-acid polypeptide reads, in one-letter code: Non-specific lipid-transfer protein (116 aa).

The signal sequence occupies residues M1–A25. Cystine bridges form between C28-C75, C38-C52, C53-C98, and C73-C112.

Belongs to the plant LTP family.

Plant non-specific lipid-transfer proteins transfer phospholipids as well as galactolipids across membranes. May play a role in wax or cutin deposition in the cell walls of expanding epidermal cells and certain secretory tissues. The polypeptide is Non-specific lipid-transfer protein (Gerbera hybrida (Daisy)).